The following is a 772-amino-acid chain: Uracil catabolism protein 2 (772 aa).

Residues 1–70 (MDINSNASVS…KKPRKKRKTF (70 aa)) form a disordered region. Basic and acidic residues predominate over residues 39 to 51 (HPEDSARAKERSE). Residues 59–69 (GNKKPRKKRKT) are compositionally biased toward basic residues. Positions 72-101 (CDTCRRVKTRCDFEPFIGKCYRCNVLQLDC) form a DNA-binding region, zn(2)-C6 fungal-type.

Belongs to the URC2 family.

Its subcellular location is the cytoplasm. The protein resides in the nucleus. Its function is as follows. Probable transcriptional activator involved in uracil catabolism. The protein is Uracil catabolism protein 2 (URC2) of Saccharomyces cerevisiae (strain ATCC 204508 / S288c) (Baker's yeast).